The primary structure comprises 70 residues: Probable tautomerase RSp0893 (70 aa).

The active-site Proton acceptor; via imino nitrogen is the proline 2.

This sequence belongs to the 4-oxalocrotonate tautomerase family.

This is Probable tautomerase RSp0893 from Ralstonia nicotianae (strain ATCC BAA-1114 / GMI1000) (Ralstonia solanacearum).